Here is a 254-residue protein sequence, read N- to C-terminus: MNNKISVYDKDNFFELYQKLRANPISLNEIIEKPTMLSLLPNLKGKKLLDLGCGTGGHLQLYLERGAAKVIGTDLSEKMLEQAEKDLQKCGQFSGRFSLYHLPIEKLAELPESHFDVITSSFAFHYIENFPTLLSTIHDKLSSNGTLIFSQEHPITTCHKEGERWEKNDKKQQVAYRLNHYREEGKRNRNWFKQPFQTYHRTTATIINNLIHARFQIEQMEEPMLADQPQWHNEFKDLSHRPPLLFIKARKVEK.

This is an uncharacterized protein from Haemophilus influenzae (strain ATCC 51907 / DSM 11121 / KW20 / Rd).